The sequence spans 338 residues: Glyceraldehyde-3-phosphate dehydrogenase (338 aa).

NAD(+) is bound by residues 13–14 (RI), D35, and R80. Residues 151 to 153 (SCT), T182, 211 to 212 (TG), and R234 contribute to the D-glyceraldehyde 3-phosphate site. The Nucleophile role is filled by C152. Residue N317 participates in NAD(+) binding.

The protein belongs to the glyceraldehyde-3-phosphate dehydrogenase family. In terms of assembly, homotetramer.

The protein localises to the cytoplasm. It catalyses the reaction D-glyceraldehyde 3-phosphate + phosphate + NAD(+) = (2R)-3-phospho-glyceroyl phosphate + NADH + H(+). It participates in carbohydrate degradation; glycolysis; pyruvate from D-glyceraldehyde 3-phosphate: step 1/5. This is Glyceraldehyde-3-phosphate dehydrogenase (gpdA) from Aspergillus oryzae (strain ATCC 42149 / RIB 40) (Yellow koji mold).